The primary structure comprises 282 residues: Acyl-CoA-binding domain-containing protein 6 (282 aa).

The interval 1–39 (MATPFLPSGATTGDSGGELSSGDDSGDMESFQTPEAEGT) is disordered. At serine 41 the chain carries Phosphoserine. The 86-residue stretch at 42-127 (LAELFEKAAA…VKKLDPGWNP (86 aa)) folds into the ACB domain. Residues 69-73 (YARFK) and lysine 95 each bind an acyl-CoA. Residue serine 106 is modified to Phosphoserine. An an acyl-CoA-binding site is contributed by tyrosine 114. 2 ANK repeats span residues 191–220 (EGRALLHWACDRGHKELVKVLLQYEAGINC) and 224–253 (EGQTALHYAAACEFLDIVELLLQSGADPTL).

As to quaternary structure, monomer.

It localises to the cytoplasm. It is found in the nucleus. Its function is as follows. Binds long-chain acyl-coenzyme A molecules with a strong preference for unsaturated C18:1-CoA, lower affinity for unsaturated C20:4-CoA, and very weak affinity for saturated C16:0-CoA. Does not bind fatty acids. Plays a role in protein N-myristoylation. The protein is Acyl-CoA-binding domain-containing protein 6 (Acbd6) of Mus musculus (Mouse).